An 898-amino-acid polypeptide reads, in one-letter code: Magnesium-transporting ATPase, P-type 1 (898 aa).

The Cytoplasmic portion of the chain corresponds to 1-94; it reads MFKEIFTRLI…QPSPWWVHLW (94 aa). A helical membrane pass occupies residues 95-115; that stretch reads VCYRNPFNILLTILGAISYAT. Residue Glu116 is a topological domain, extracellular. The chain crosses the membrane as a helical span at residues 117–137; that stretch reads DLFAAGVIALMVAISTLLNFI. Residues 138–287 lie on the Cytoplasmic side of the membrane; that stretch reads QEARSTKAAD…PNAFQQGISR (150 aa). The helical transmembrane segment at 288–308 threads the bilayer; sequence VSMLLIRFMLVMAPVVLLING. Over 309–317 the chain is Extracellular; sequence YTKGDWWEA. A helical membrane pass occupies residues 318–335; that stretch reads ALFALSVAVGLTPEMLPM. Mg(2+) is bound at residue Glu331. The Cytoplasmic portion of the chain corresponds to 336 to 695; sequence IVTSTLARGA…IEGRRTFANM (360 aa). The active-site 4-aspartylphosphate intermediate is the Asp373. Positions 641, 645, and 709 each coordinate Mg(2+). Residues 696-715 form a helical membrane-spanning segment; sequence LKYIKMTASSNFGNVFSVLV. Residues 716 to 724 lie on the Extracellular side of the membrane; that stretch reads ASAFLPFLP. A helical membrane pass occupies residues 725-744; sequence MLPLHLLIQNLLYDVSQVAI. Mg(2+)-binding residues include Asn734 and Asp738. At 745–766 the chain is on the cytoplasmic side; the sequence is PFDNVDDEQIQKPQRWNPADLG. The helical transmembrane segment at 767-790 threads the bilayer; sequence RFMIFFGPISSIFDILTFCLMWWV. Topologically, residues 791–799 are extracellular; sequence FHANTPETQ. Residues 800 to 818 form a helical membrane-spanning segment; the sequence is TLFQSGWFVVGLLSQTLIV. Topologically, residues 819–831 are cytoplasmic; that stretch reads HMIRTRRVPFIQS. The helical transmembrane segment at 832–851 threads the bilayer; that stretch reads CASWPLMIMTVIVMIVGIAL. Over 852–866 the chain is Extracellular; the sequence is PFSPLASYLQLQALP. Residues 867-886 form a helical membrane-spanning segment; that stretch reads LSYFPWLVAILAGYMTLTQL. Over 887-898 the chain is Cytoplasmic; sequence VKGFYSRRYGWQ.

It belongs to the cation transport ATPase (P-type) (TC 3.A.3) family. Type IIIB subfamily.

Its subcellular location is the cell inner membrane. It carries out the reaction Mg(2+)(out) + ATP + H2O = Mg(2+)(in) + ADP + phosphate + H(+). Mediates magnesium influx to the cytosol. This Escherichia coli O157:H7 protein is Magnesium-transporting ATPase, P-type 1 (mgtA).